The sequence spans 91 residues: Large ribosomal subunit protein bL31B (91 aa).

It belongs to the bacterial ribosomal protein bL31 family. Type B subfamily. Part of the 50S ribosomal subunit.

In Neisseria meningitidis serogroup C (strain 053442), this protein is Large ribosomal subunit protein bL31B.